A 270-amino-acid polypeptide reads, in one-letter code: Thiamine thiazole synthase (270 aa).

Residues A39, 58–59, G66, and L130 each bind NAD(+); that span reads EQ. C159 bears the 2,3-didehydroalanine (Cys) mark. Residue D161 coordinates NAD(+). Residues D161 and H176 each coordinate Fe cation. I223 is an NAD(+) binding site. Glycine is bound at residue R233.

Belongs to the THI4 family. Homooctamer; tetramer of dimers. Fe(2+) is required as a cofactor. In terms of processing, during the catalytic reaction, a sulfide is transferred from Cys-159 to a reaction intermediate, generating a dehydroalanine residue.

The catalysed reaction is [ADP-thiazole synthase]-L-cysteine + glycine + NAD(+) = [ADP-thiazole synthase]-dehydroalanine + ADP-5-ethyl-4-methylthiazole-2-carboxylate + nicotinamide + 3 H2O + 2 H(+). It functions in the pathway cofactor biosynthesis; thiamine diphosphate biosynthesis. Its function is as follows. Involved in biosynthesis of the thiamine precursor thiazole. Catalyzes the conversion of NAD and glycine to adenosine diphosphate 5-(2-hydroxyethyl)-4-methylthiazole-2-carboxylic acid (ADT), an adenylated thiazole intermediate. The reaction includes an iron-dependent sulfide transfer from a conserved cysteine residue of the protein to a thiazole intermediate. The enzyme can only undergo a single turnover, which suggests it is a suicide enzyme. This chain is Thiamine thiazole synthase, found in Aeropyrum pernix (strain ATCC 700893 / DSM 11879 / JCM 9820 / NBRC 100138 / K1).